A 400-amino-acid chain; its full sequence is Chalcone synthase C2 (400 aa).

The active site involves Cys168.

The protein belongs to the thiolase-like superfamily. Chalcone/stilbene synthases family.

The enzyme catalyses (E)-4-coumaroyl-CoA + 3 malonyl-CoA + 3 H(+) = 2',4,4',6'-tetrahydroxychalcone + 3 CO2 + 4 CoA. Its pathway is secondary metabolite biosynthesis; flavonoid biosynthesis. The primary product of this enzyme is 4,2',4',6'-tetrahydroxychalcone (also termed naringenin-chalcone or chalcone) which can under specific conditions spontaneously isomerize into naringenin. This is Chalcone synthase C2 (C2) from Zea mays (Maize).